The sequence spans 1032 residues: Exo-beta-D-glucosaminidase (1032 aa).

Residues 1 to 32 (MSFRQKRTRIPLLAMTVTALAAAVCGVTTAPA) form the signal peptide. Residues 33 to 46 (ATGAEVAVPLSVGA) constitute a propeptide that is removed on maturation. Asp-469 serves as the catalytic Proton donor. Glu-541 (nucleophile) is an active-site residue. Positions 883-908 (SVRISGWNTGTQTVPADGSGPGPSDP) are disordered. Residues 909–1032 (VDYQAEDATI…GGPNVDKITL (124 aa)) form the CBM6 domain.

The protein belongs to the glycosyl hydrolase 2 family. As to quaternary structure, monomer.

Its subcellular location is the secreted. It catalyses the reaction Hydrolysis of chitosan or chitosan oligosaccharides to remove successive D-glucosamine residues from the non-reducing termini.. In terms of biological role, hydrolyzes chitosan and chitooligosaccharides with retention of anomeric configuration. Has maximum activity on chitotetraose, chitopentaose and their corresponding alcohols, with a slight decrease in the rate of hydrolysis on longer chains. Has no activity against beta-D-glucopyranoside, beta-D-xylopyranoside, beta-D-mannoside, beta-D-glucuronide, beta-D-galactoside, beta-D-N-acetylgalactosamide, beta-D-N-acetylglucosaminide and alpha-D-N-acetylglucosaminide. This Amycolatopsis orientalis (Nocardia orientalis) protein is Exo-beta-D-glucosaminidase.